We begin with the raw amino-acid sequence, 260 residues long: Fructose import ATP-binding protein FrcA (260 aa).

Residues 7–251 form the ABC transporter domain; the sequence is LTARGLVKRY…DAVAFMTGAK (245 aa). 39 to 46 is a binding site for ATP; that stretch reads GDNGAGKS.

The protein belongs to the ABC transporter superfamily. The complex is composed of two ATP-binding proteins (FrcA), two transmembrane proteins (FrcC) and a solute-binding protein (FrcB).

It is found in the cell inner membrane. It catalyses the reaction D-fructose(out) + ATP + H2O = D-fructose(in) + ADP + phosphate + H(+). In terms of biological role, part of the high-affinity ABC transporter complex FrcBCA involved in fructose uptake. Is also a high-affinity transporter for ribose and mannose. Responsible for energy coupling to the transport system. The protein is Fructose import ATP-binding protein FrcA of Rhizobium meliloti (Ensifer meliloti).